We begin with the raw amino-acid sequence, 927 residues long: Bifunctional glutamine synthetase adenylyltransferase/adenylyl-removing enzyme (927 aa).

Residues 1–428 are adenylyl removase; it reads MTMTDASDLL…AQFDQVFADK (428 aa). Residues 438–927 form an adenylyl transferase region; sequence DQAAGCIWSG…AALWARVFGA (490 aa).

Belongs to the GlnE family. Mg(2+) serves as cofactor.

The enzyme catalyses [glutamine synthetase]-O(4)-(5'-adenylyl)-L-tyrosine + phosphate = [glutamine synthetase]-L-tyrosine + ADP. It catalyses the reaction [glutamine synthetase]-L-tyrosine + ATP = [glutamine synthetase]-O(4)-(5'-adenylyl)-L-tyrosine + diphosphate. Functionally, involved in the regulation of glutamine synthetase GlnA, a key enzyme in the process to assimilate ammonia. When cellular nitrogen levels are high, the C-terminal adenylyl transferase (AT) inactivates GlnA by covalent transfer of an adenylyl group from ATP to specific tyrosine residue of GlnA, thus reducing its activity. Conversely, when nitrogen levels are low, the N-terminal adenylyl removase (AR) activates GlnA by removing the adenylyl group by phosphorolysis, increasing its activity. The regulatory region of GlnE binds the signal transduction protein PII (GlnB) which indicates the nitrogen status of the cell. This is Bifunctional glutamine synthetase adenylyltransferase/adenylyl-removing enzyme from Burkholderia pseudomallei (strain K96243).